The following is a 603-amino-acid chain: Ankyrin repeat and LEM domain-containing protein 2 homolog (603 aa).

Residues 2-22 (GRKSAILAVILAIIYFRSNFS) traverse the membrane as a helical; Signal-anchor for type III membrane protein segment. 2 ANK repeats span residues 161 to 190 (FRYN…NIDF) and 221 to 250 (NSDT…TDRT). Disordered regions lie at residues 446–465 (ISEN…DDDD) and 505–538 (LPPP…PPPT). Residues 456 to 465 (DSADDEDDDD) show a composition bias toward acidic residues.

It belongs to the ANKLE2 family. As to quaternary structure, interacts with baf-1. Interacts with protein phosphatase 2A (PP2A) components.

It is found in the nucleus membrane. Functionally, involved in mitotic nuclear envelope reassembly by promoting dephosphorylation of baf-1 during mitotic exit. Coordinates the control of baf-1 dephosphorylation by inhibiting VRK1 kinase and promoting dephosphorylation of baf-1 by protein phosphatase 2A (PP2A), thereby facilitating nuclear envelope assembly. It is unclear whether it acts as a real PP2A regulatory subunit or whether it is involved in recruitment of the PP2A complex. This Caenorhabditis elegans protein is Ankyrin repeat and LEM domain-containing protein 2 homolog (lem-4).